Here is a 262-residue protein sequence, read N- to C-terminus: Thiazole synthase (262 aa).

The Schiff-base intermediate with DXP role is filled by Lys-105. Residues Gly-166, Ala-192–Gly-193, and Asn-214–Thr-215 each bind 1-deoxy-D-xylulose 5-phosphate.

Belongs to the ThiG family. In terms of assembly, homotetramer. Forms heterodimers with either ThiH or ThiS.

It is found in the cytoplasm. The catalysed reaction is [ThiS sulfur-carrier protein]-C-terminal-Gly-aminoethanethioate + 2-iminoacetate + 1-deoxy-D-xylulose 5-phosphate = [ThiS sulfur-carrier protein]-C-terminal Gly-Gly + 2-[(2R,5Z)-2-carboxy-4-methylthiazol-5(2H)-ylidene]ethyl phosphate + 2 H2O + H(+). Its pathway is cofactor biosynthesis; thiamine diphosphate biosynthesis. In terms of biological role, catalyzes the rearrangement of 1-deoxy-D-xylulose 5-phosphate (DXP) to produce the thiazole phosphate moiety of thiamine. Sulfur is provided by the thiocarboxylate moiety of the carrier protein ThiS. In vitro, sulfur can be provided by H(2)S. This chain is Thiazole synthase, found in Phenylobacterium zucineum (strain HLK1).